The chain runs to 185 residues: TATA-box-binding protein (185 aa).

A run of 2 repeats spans residues 3 to 78 and 94 to 176.

Belongs to the TBP family.

General factor that plays a role in the activation of archaeal genes transcribed by RNA polymerase. Binds specifically to the TATA box promoter element which lies close to the position of transcription initiation. In Methanopyrus kandleri (strain AV19 / DSM 6324 / JCM 9639 / NBRC 100938), this protein is TATA-box-binding protein.